Here is a 475-residue protein sequence, read N- to C-terminus: Lipid II flippase MurJ (475 aa).

The Cytoplasmic portion of the chain corresponds to 1–2 (MS). The chain crosses the membrane as a helical span at residues 3–23 (ILFSSILFSIATFFSRILGLF). Topologically, residues 24-35 (RDVLFAKYFGVS) are periplasmic. The chain crosses the membrane as a helical span at residues 36–56 (YELDAYFIAIMFPFFLRKVFG). Residues 57–78 (EGAMSSAFVPLYSEKSGEEKDK) are Cytoplasmic-facing. A helical transmembrane segment spans residues 79 to 99 (FLSSVINGFSLIILALVILSY). Residues 100-123 (FFPELIINLFGAGSSHETKILAKK) lie on the Periplasmic side of the membrane. A helical membrane pass occupies residues 124 to 144 (LLLITSPSIYFIFLWAISYSI). Topologically, residues 145-150 (LNTNNK) are cytoplasmic. Residues 151-171 (FFWPALTPSISNITIIIGTFL) form a helical membrane-spanning segment. The Periplasmic portion of the chain corresponds to 172 to 175 (STKY). The helical transmembrane segment at 176–196 (GIISPTIGFLIGSILMFFSII) threads the bilayer. The Cytoplasmic portion of the chain corresponds to 197–213 (KSIIKHKYYFTIKHFPH). A helical transmembrane segment spans residues 214 to 238 (FLKLFFPTFMTMVVSQINTVVDMNV). At 239–249 (VSFYDKGSISY) the chain is on the periplasmic side. Residues 250 to 271 (LQYASRFYLLPYGLFAVSVSTV) traverse the membrane as a helical segment. The Cytoplasmic segment spans residues 272–287 (VLSKISNDRKNFNYHL). A helical transmembrane segment spans residues 288 to 308 (NDALKTTLFFTIPSMVGLIFL). Over 309-332 (STPIIRFFYEHGAFTSKDTLITSK) the chain is Periplasmic. The chain crosses the membrane as a helical span at residues 333 to 353 (ILIAYTLGLPFYGIYSTISRS). At 354–362 (YHAIKNTKT) the chain is on the cytoplasmic side. Residues 363 to 383 (PFIAATIVSLSNIILDIIFGL) traverse the membrane as a helical segment. Topologically, residues 384–386 (KYG) are periplasmic. The helical transmembrane segment at 387 to 407 (PIGVALATSIAGIIGVLYLLF) threads the bilayer. Residues 408-416 (SVKTFPIKD) lie on the Cytoplasmic side of the membrane. A helical membrane pass occupies residues 417 to 437 (FLKISLNSLIMLFVIYLTDFT). Residues 438–440 (DNE) are Periplasmic-facing. A helical transmembrane segment spans residues 441–461 (FWFLIQILIGILVYLIFSSIF). Topologically, residues 462 to 475 (YRDLIRRFLYARKK) are cytoplasmic.

Belongs to the MurJ/MviN family.

It localises to the cell inner membrane. The protein operates within cell wall biogenesis; peptidoglycan biosynthesis. Involved in peptidoglycan biosynthesis. Transports lipid-linked peptidoglycan precursors from the inner to the outer leaflet of the cytoplasmic membrane. This chain is Lipid II flippase MurJ, found in Thermosipho africanus (strain TCF52B).